The chain runs to 363 residues: 3-isopropylmalate dehydrogenase (363 aa).

NAD(+) is bound at residue 78–91; it reads GKKWDYLPIESRPE. Residues arginine 99, arginine 109, arginine 138, and aspartate 227 each coordinate substrate. Mg(2+) contacts are provided by aspartate 227, aspartate 251, and aspartate 255. Residue 285 to 297 participates in NAD(+) binding; it reads GSAPDIEGKNIAN.

The protein belongs to the isocitrate and isopropylmalate dehydrogenases family. LeuB type 1 subfamily. Homodimer. Mg(2+) is required as a cofactor. Mn(2+) serves as cofactor.

It is found in the cytoplasm. It catalyses the reaction (2R,3S)-3-isopropylmalate + NAD(+) = 4-methyl-2-oxopentanoate + CO2 + NADH. It functions in the pathway amino-acid biosynthesis; L-leucine biosynthesis; L-leucine from 3-methyl-2-oxobutanoate: step 3/4. In terms of biological role, catalyzes the oxidation of 3-carboxy-2-hydroxy-4-methylpentanoate (3-isopropylmalate) to 3-carboxy-4-methyl-2-oxopentanoate. The product decarboxylates to 4-methyl-2 oxopentanoate. This chain is 3-isopropylmalate dehydrogenase, found in Buchnera aphidicola subsp. Schizaphis graminum (strain Sg).